We begin with the raw amino-acid sequence, 526 residues long: Fumitremorgin C synthase (526 aa).

The chain crosses the membrane as a helical span at residues 4 to 24 (LPLSPAVLFLTITLPILYFWI). Position 443 (Cys443) interacts with heme.

The protein belongs to the cytochrome P450 family. Heme is required as a cofactor.

It is found in the membrane. The catalysed reaction is tryprostatin A + reduced [NADPH--hemoprotein reductase] + O2 = fumitremorgin C + oxidized [NADPH--hemoprotein reductase] + 2 H2O + H(+). It participates in mycotoxin biosynthesis. In terms of biological role, cytochrome P450 monooxygenase; part of the gene cluster that mediates the biosynthesis of fumitremorgins, indole alkaloids that carry not only intriguing chemical structures, but also interesting biological and pharmacological activities. The biosynthesis of fumitremorgin-type alkaloids begins by condensation of the two amino acids L-tryptophan and L-proline to brevianamide F, catalyzed by the non-ribosomal peptide synthetase ftmPS/ftmA. Brevianamide F is then prenylated by the prenyltransferase ftmPT1/ftmB in the presence of dimethylallyl diphosphate, resulting in the formation of tryprostatin B. The three cytochrome P450 monooxygenases, ftmP450-1/ftmC, ftmP450-2/ftmE and ftmP450-3/FtmG, are responsible for the conversion of tryprostatin B to 6-hydroxytryprostatin B, tryprostatin A to fumitremorgin C and fumitremorgin C to 12,13-dihydroxyfumitremorgin C, respectively. The putative methyltransferase ftmMT/ftmD is expected for the conversion of 6-hydroxytryprostatin B to tryprostatin A. FtmPT2/FtmH catalyzes the prenylation of 12,13-dihydroxyfumitre-morgin C in the presence of dimethylallyl diphosphate, resulting in the formation of fumitremorgin B. Fumitremorgin B is further converted to verruculogen by ftmOx1/ftmF via the insertion of an endoperoxide bond between the two prenyl moieties. Finally, verruculogen is further converted to fumitremorgin A by the verruculogen prenyltransferase ftmPT3. This is Fumitremorgin C synthase from Neosartorya fischeri (strain ATCC 1020 / DSM 3700 / CBS 544.65 / FGSC A1164 / JCM 1740 / NRRL 181 / WB 181) (Aspergillus fischerianus).